Consider the following 121-residue polypeptide: Small ribosomal subunit protein uS13 (121 aa).

The interval 93 to 121 is disordered; it reads KGLPLRGQKTKTNARTRKGPKKTIANKKK.

It belongs to the universal ribosomal protein uS13 family. As to quaternary structure, part of the 30S ribosomal subunit. Forms a loose heterodimer with protein S19. Forms two bridges to the 50S subunit in the 70S ribosome.

Its function is as follows. Located at the top of the head of the 30S subunit, it contacts several helices of the 16S rRNA. In the 70S ribosome it contacts the 23S rRNA (bridge B1a) and protein L5 of the 50S subunit (bridge B1b), connecting the 2 subunits; these bridges are implicated in subunit movement. Contacts the tRNAs in the A and P-sites. The protein is Small ribosomal subunit protein uS13 of Clostridium perfringens (strain ATCC 13124 / DSM 756 / JCM 1290 / NCIMB 6125 / NCTC 8237 / Type A).